We begin with the raw amino-acid sequence, 179 residues long: UPF0302 protein BLi02393/BL02764 (179 aa).

This sequence belongs to the UPF0302 family.

The polypeptide is UPF0302 protein BLi02393/BL02764 (Bacillus licheniformis (strain ATCC 14580 / DSM 13 / JCM 2505 / CCUG 7422 / NBRC 12200 / NCIMB 9375 / NCTC 10341 / NRRL NRS-1264 / Gibson 46)).